Consider the following 358-residue polypeptide: UDP-N-acetylglucosamine--N-acetylmuramyl-(pentapeptide) pyrophosphoryl-undecaprenol N-acetylglucosamine transferase (358 aa).

UDP-N-acetyl-alpha-D-glucosamine contacts are provided by residues 11 to 13 (TGG), N120, R161, S188, and Q282.

This sequence belongs to the glycosyltransferase 28 family. MurG subfamily.

Its subcellular location is the cell inner membrane. It catalyses the reaction di-trans,octa-cis-undecaprenyl diphospho-N-acetyl-alpha-D-muramoyl-L-alanyl-D-glutamyl-meso-2,6-diaminopimeloyl-D-alanyl-D-alanine + UDP-N-acetyl-alpha-D-glucosamine = di-trans,octa-cis-undecaprenyl diphospho-[N-acetyl-alpha-D-glucosaminyl-(1-&gt;4)]-N-acetyl-alpha-D-muramoyl-L-alanyl-D-glutamyl-meso-2,6-diaminopimeloyl-D-alanyl-D-alanine + UDP + H(+). Its pathway is cell wall biogenesis; peptidoglycan biosynthesis. Its function is as follows. Cell wall formation. Catalyzes the transfer of a GlcNAc subunit on undecaprenyl-pyrophosphoryl-MurNAc-pentapeptide (lipid intermediate I) to form undecaprenyl-pyrophosphoryl-MurNAc-(pentapeptide)GlcNAc (lipid intermediate II). In Synechococcus sp. (strain CC9902), this protein is UDP-N-acetylglucosamine--N-acetylmuramyl-(pentapeptide) pyrophosphoryl-undecaprenol N-acetylglucosamine transferase.